A 58-amino-acid chain; its full sequence is UPF0391 membrane protein Bxeno_A2959 (58 aa).

The next 2 membrane-spanning stretches (helical) occupy residues 4–24 and 33–53; these read WALF…TGVA and FLFI…FVVT.

This sequence belongs to the UPF0391 family.

The protein resides in the cell membrane. This is UPF0391 membrane protein Bxeno_A2959 from Paraburkholderia xenovorans (strain LB400).